We begin with the raw amino-acid sequence, 152 residues long: MFRGASAINLDSKGRIAIPTRYRAEIIEQNAGQMVCTVDIRQPCLLLYPLKEWELVEQKLSALANFDLTHRSLQRVMLGYATECELDSAGRILISGPLRLHAKLEKSLMLVGQLNKFEIWSDAEWHAQIEQDMALGASGQFALSEELKMLSL.

SpoVT-AbrB domains lie at 5–52 (ASAI…PLKE) and 81–124 (ATEC…SDAE).

The protein belongs to the MraZ family. In terms of assembly, forms oligomers.

Its subcellular location is the cytoplasm. The protein resides in the nucleoid. The polypeptide is Transcriptional regulator MraZ (Pasteurella multocida (strain Pm70)).